Here is a 98-residue protein sequence, read N- to C-terminus: Derivative of benzaldehyde biosynthesis cluster protein C (98 aa).

The protein belongs to the YciI family.

It participates in secondary metabolite biosynthesis. Functionally, part of the gene cluster that mediates the biosynthesis of the antibiotic 2,4-dihydroxy-3-methyl-6-(2-oxopropyl)benzaldehyde (DHMBA) and its derivatives. The direct non-reducing polyketide synthase dbaI product is 2,4-dihydroxy-3-methyl-6-(2-oxopropyl)benzaldehyde (DHMBA), produced by condensation of one acetyl-CoA starter unit with 4 malonyl-CoA units and one methylation step. The FAD-dependent monooxygenase dbaH is responsible for the synthesis of yellow pigments derived from the oxidation of DHMBA. The roles of dbaB, C, E and F have still to be determined. This chain is Derivative of benzaldehyde biosynthesis cluster protein C, found in Emericella nidulans (strain FGSC A4 / ATCC 38163 / CBS 112.46 / NRRL 194 / M139) (Aspergillus nidulans).